The primary structure comprises 399 residues: Enoyl-[acyl-carrier-protein] reductase [NADH] (399 aa).

Residues 48 to 53, 74 to 75, 111 to 112, and 139 to 140 contribute to the NAD(+) site; these read GASTGY, FE, DA, and LA. Substrate is bound at residue tyrosine 225. Catalysis depends on tyrosine 235, which acts as the Proton donor. NAD(+)-binding positions include lysine 244 and 273-275; that span reads VVT.

The protein belongs to the TER reductase family. In terms of assembly, monomer.

The enzyme catalyses a 2,3-saturated acyl-[ACP] + NAD(+) = a (2E)-enoyl-[ACP] + NADH + H(+). It functions in the pathway lipid metabolism; fatty acid biosynthesis. Its function is as follows. Involved in the final reduction of the elongation cycle of fatty acid synthesis (FAS II). Catalyzes the reduction of a carbon-carbon double bond in an enoyl moiety that is covalently linked to an acyl carrier protein (ACP). This chain is Enoyl-[acyl-carrier-protein] reductase [NADH], found in Serratia proteamaculans (strain 568).